The primary structure comprises 407 residues: Tryptophan synthase beta chain (407 aa).

N6-(pyridoxal phosphate)lysine is present on lysine 98.

The protein belongs to the TrpB family. As to quaternary structure, tetramer of two alpha and two beta chains. Requires pyridoxal 5'-phosphate as cofactor.

It catalyses the reaction (1S,2R)-1-C-(indol-3-yl)glycerol 3-phosphate + L-serine = D-glyceraldehyde 3-phosphate + L-tryptophan + H2O. It functions in the pathway amino-acid biosynthesis; L-tryptophan biosynthesis; L-tryptophan from chorismate: step 5/5. Its function is as follows. The beta subunit is responsible for the synthesis of L-tryptophan from indole and L-serine. This Bradyrhizobium sp. (strain BTAi1 / ATCC BAA-1182) protein is Tryptophan synthase beta chain.